The chain runs to 454 residues: MISRSALSRGSQLALRRPAAAKTAQRGFAAAAASPAASYEPTTIAGVKVASRDDSGPTTRLAVVAKAGTRYEPLPGLTVGLEEFAFKNTNKRTALRITRESELLGGQLQAYHTREAVVLQASFLREDLPYFTELLAEVISETKYTTHEFHELVENCIHEKQAKLDSAAIALDAAHNVAFHSGLGSPLYPTVDTPTSSYLNENSVAAFANLAYNKANIAVVADGASQAGLEKWVEPFFKGVPATSSGNLNTAASKYFGGEQRVAKNGKNAIVIAFPGASLGVPHPETSVLVGLLGGVSNIKWSPGFSLLAKATAANPGAEAFAHNYAYSDAGLLAIQITGKGAAVGKVAVEAVKGLKAIAAGGVSKEDLTKAIAKAKFNLLSASEVSGTGLVHAGANLLAGGKPIQVAETLKALEGVTAEKLQAAAKKLLEGKASVSAVGDLHVLPYAEDLGLKV.

The transit peptide at 1 to 35 directs the protein to the mitochondrion; it reads MISRSALSRGSQLALRRPAAAKTAQRGFAAAAASP.

This sequence belongs to the peptidase M16 family. UQCRC2/QCR2 subfamily. In terms of assembly, component of the ubiquinol-cytochrome c oxidoreductase (cytochrome b-c1 complex, complex III, CIII), a multisubunit enzyme composed of 10 subunits. The complex is composed of 3 respiratory subunits cytochrome b (cob), cytochrome c1 (cyt-1) and Rieske protein (fes-1), 2 core protein subunits pep and ucr-1, and 5 low-molecular weight protein subunits qcr6, qcr7, qcr8, qcr9 and probably NCU16844/qcr10. The complex exists as an obligatory dimer and forms supercomplexes (SCs) in the inner mitochondrial membrane with NADH-ubiquinone oxidoreductase (complex I, CI) and cytochrome c oxidase (complex IV, CIV), resulting in different assemblies (supercomplexes SCI(1)III(2), SCIII(2)IV(1) and SCIII(2)IV(2) as well as higher order I(x)III(y)IV(z) megacomplexes).

It localises to the mitochondrion inner membrane. In terms of biological role, component of the ubiquinol-cytochrome c oxidoreductase, a multisubunit transmembrane complex that is part of the mitochondrial electron transport chain which drives oxidative phosphorylation. The respiratory chain contains 3 multisubunit complexes succinate dehydrogenase (complex II, CII), ubiquinol-cytochrome c oxidoreductase (cytochrome b-c1 complex, complex III, CIII) and cytochrome c oxidase (complex IV, CIV), that cooperate to transfer electrons derived from NADH and succinate to molecular oxygen, creating an electrochemical gradient over the inner membrane that drives transmembrane transport and the ATP synthase. The cytochrome b-c1 complex catalyzes electron transfer from ubiquinol to cytochrome c, linking this redox reaction to translocation of protons across the mitochondrial inner membrane, with protons being carried across the membrane as hydrogens on the quinol. In the process called Q cycle, 2 protons are consumed from the matrix, 4 protons are released into the intermembrane space and 2 electrons are passed to cytochrome c. In Neurospora crassa (strain ATCC 24698 / 74-OR23-1A / CBS 708.71 / DSM 1257 / FGSC 987), this protein is Cytochrome b-c1 complex subunit 2, mitochondrial (ucr-1).